Consider the following 935-residue polypeptide: Protein HIRA (935 aa).

WD repeat units follow at residues 14-58 (HDTG…DKKK), 72-111 (ESQSQSNSCRWSPDGKRFAFGSDDSSVSVWEYVGLINSMG), 131-170 (GHSMEVLTVEWSPNGKYLASGSIDYRIIIYNARKLPDRIT), 174-213 (DIQLPVKGLSWDPIGKYLASLEGDKKLRFWATDSWQCVKS), 222-261 (IEETMLTRLDWSPDGKYLMTPAAVRSGKPLIKLIQRQTWK), 277-320 (RAMP…KPLF), and 325-362 (IFNHTVMDFAWCGRNLLACSQDGTVKVIHLSESVIGEM). The disordered stretch occupies residues 431-556 (SSDIQLTKSM…RNKKRKVPAT (126 aa)). Residues 439–468 (SMEDNSKENESKNSEKTMMEERNKQIDVRK) are compositionally biased toward basic and acidic residues. Polar residues predominate over residues 480–492 (GTTTADPMTSLSS). The segment covering 520–542 (DLEDSSDSDDDDEEEEEDMEISD) has biased composition (acidic residues).

The protein belongs to the WD repeat HIR1 family.

It is found in the nucleus. Its function is as follows. Required for replication-independent chromatin assembly and for the periodic repression of histone gene transcription during the cell cycle. This Caenorhabditis elegans protein is Protein HIRA.